Reading from the N-terminus, the 182-residue chain is Translation initiation factor IF-3 (182 aa).

The segment at 1–22 (MPLGDCNISTPDNKQNRKNQEI) is disordered.

It belongs to the IF-3 family. In terms of assembly, monomer.

The protein localises to the cytoplasm. Functionally, IF-3 binds to the 30S ribosomal subunit and shifts the equilibrium between 70S ribosomes and their 50S and 30S subunits in favor of the free subunits, thus enhancing the availability of 30S subunits on which protein synthesis initiation begins. The polypeptide is Translation initiation factor IF-3 (Xanthomonas campestris pv. campestris (strain ATCC 33913 / DSM 3586 / NCPPB 528 / LMG 568 / P 25)).